Reading from the N-terminus, the 253-residue chain is TCF3 fusion partner (253 aa).

Disordered regions lie at residues 49–72 and 142–211; these read SGGLGGSGLRERDEEEEAARGRRR and DEGS…PELA. Residue Ser167 is modified to Phosphoserine. Pro residues predominate over residues 170 to 181; that stretch reads RRTPAPPEPGSP. Thr172 carries the post-translational modification Phosphothreonine. Ser180 and Ser188 each carry phosphoserine. Residue Thr207 is modified to Phosphothreonine. Residue Lys216 forms a Glycyl lysine isopeptide (Lys-Gly) (interchain with G-Cter in SUMO2) linkage. Positions 234 to 253 are disordered; the sequence is VSRGPDKLLPYPTLASPASD. Phosphoserine is present on residues Ser249 and Ser252.

As to quaternary structure, interacts with NOL3; translocates NOL3 into the nucleus and negatively regulated TFPT-induced cell death. Component of the chromatin remodeling INO80 complex; specifically part of a complex module associated with the N-terminus of INO80.

It is found in the nucleus. Appears to promote apoptosis in a p53/TP53-independent manner. Functionally, putative regulatory component of the chromatin remodeling INO80 complex which is involved in transcriptional regulation, DNA replication and probably DNA repair. The sequence is that of TCF3 fusion partner (TFPT) from Homo sapiens (Human).